The chain runs to 145 residues: 3-dehydroquinate dehydratase (145 aa).

The active-site Proton acceptor is the Tyr-22. Residues Asn-71, His-77, and Asp-84 each contribute to the substrate site. His-97 acts as the Proton donor in catalysis. Substrate contacts are provided by residues 98 to 99 (LS) and Arg-108.

The protein belongs to the type-II 3-dehydroquinase family. In terms of assembly, homododecamer.

It carries out the reaction 3-dehydroquinate = 3-dehydroshikimate + H2O. It participates in metabolic intermediate biosynthesis; chorismate biosynthesis; chorismate from D-erythrose 4-phosphate and phosphoenolpyruvate: step 3/7. In terms of biological role, catalyzes a trans-dehydration via an enolate intermediate. This Francisella tularensis subsp. mediasiatica (strain FSC147) protein is 3-dehydroquinate dehydratase.